The chain runs to 143 residues: Large ribosomal subunit protein uL11 (143 aa).

The protein belongs to the universal ribosomal protein uL11 family. Part of the ribosomal stalk of the 50S ribosomal subunit. Interacts with L10 and the large rRNA to form the base of the stalk. L10 forms an elongated spine to which L12 dimers bind in a sequential fashion forming a multimeric L10(L12)X complex. Post-translationally, one or more lysine residues are methylated.

Its function is as follows. Forms part of the ribosomal stalk which helps the ribosome interact with GTP-bound translation factors. The polypeptide is Large ribosomal subunit protein uL11 (Beutenbergia cavernae (strain ATCC BAA-8 / DSM 12333 / CCUG 43141 / JCM 11478 / NBRC 16432 / NCIMB 13614 / HKI 0122)).